An 88-amino-acid polypeptide reads, in one-letter code: Acyl-CoA-binding domain-containing protein 7 (88 aa).

The ACB domain occupies 3–88; the sequence is LQADFDKAAK…AKELIEKYGI (86 aa). An acyl-CoA-binding positions include R15, 30 to 34, K56, and Y75; that span reads YGLYK.

The protein belongs to the ACBD7 family.

Binds medium- and long-chain acyl-CoA esters. The sequence is that of Acyl-CoA-binding domain-containing protein 7 (ACBD7) from Bos taurus (Bovine).